Here is a 645-residue protein sequence, read N- to C-terminus: UvrABC system protein C (645 aa).

Residues 1-20 form a disordered region; it reads MTDLPPHSSHHPADQGEPLV. The 79-residue stretch at 40-118 folds into the GIY-YIG domain; it reads YSPGVYRMLS…IKRMKPRFNI (79 aa). The UVR domain maps to 228 to 263; that stretch reads TELQQRLVAEMEQASQELNYERAASIRDRIRGFASI.

Belongs to the UvrC family. In terms of assembly, interacts with UvrB in an incision complex.

It is found in the cytoplasm. Its function is as follows. The UvrABC repair system catalyzes the recognition and processing of DNA lesions. UvrC both incises the 5' and 3' sides of the lesion. The N-terminal half is responsible for the 3' incision and the C-terminal half is responsible for the 5' incision. This chain is UvrABC system protein C, found in Gluconobacter oxydans (strain 621H) (Gluconobacter suboxydans).